The following is a 246-amino-acid chain: Large ribosomal subunit protein uL3 (246 aa).

2 disordered regions span residues 140 to 162 (SHRS…NKKM) and 215 to 246 (DVPL…EENA). Glutamine 151 carries the post-translational modification N5-methylglutamine. A compositionally biased stretch (low complexity) spans 234–246 (EAAPEAPASEENA).

This sequence belongs to the universal ribosomal protein uL3 family. Part of the 50S ribosomal subunit. Forms a cluster with proteins L14 and L19. Post-translationally, methylated by PrmB.

Its function is as follows. One of the primary rRNA binding proteins, it binds directly near the 3'-end of the 23S rRNA, where it nucleates assembly of the 50S subunit. The protein is Large ribosomal subunit protein uL3 of Methylorubrum extorquens (strain PA1) (Methylobacterium extorquens).